We begin with the raw amino-acid sequence, 122 residues long: Small ribosomal subunit protein uS13 (122 aa).

The disordered stretch occupies residues 99-122 (RGQRTHTNARTRKGPAKAIAGKKK).

This sequence belongs to the universal ribosomal protein uS13 family. Part of the 30S ribosomal subunit. Forms a loose heterodimer with protein S19. Forms two bridges to the 50S subunit in the 70S ribosome.

Its function is as follows. Located at the top of the head of the 30S subunit, it contacts several helices of the 16S rRNA. In the 70S ribosome it contacts the 23S rRNA (bridge B1a) and protein L5 of the 50S subunit (bridge B1b), connecting the 2 subunits; these bridges are implicated in subunit movement. Contacts the tRNAs in the A and P-sites. This chain is Small ribosomal subunit protein uS13, found in Agrobacterium fabrum (strain C58 / ATCC 33970) (Agrobacterium tumefaciens (strain C58)).